We begin with the raw amino-acid sequence, 96 residues long: UPF0235 protein VCM66_0443 (96 aa).

The protein belongs to the UPF0235 family.

The protein is UPF0235 protein VCM66_0443 of Vibrio cholerae serotype O1 (strain M66-2).